Here is a 315-residue protein sequence, read N- to C-terminus: Ribosomal RNA large subunit methyltransferase F (315 aa).

The protein belongs to the methyltransferase superfamily. METTL16/RlmF family.

The protein resides in the cytoplasm. It carries out the reaction adenosine(1618) in 23S rRNA + S-adenosyl-L-methionine = N(6)-methyladenosine(1618) in 23S rRNA + S-adenosyl-L-homocysteine + H(+). In terms of biological role, specifically methylates the adenine in position 1618 of 23S rRNA. This chain is Ribosomal RNA large subunit methyltransferase F, found in Aeromonas salmonicida (strain A449).